A 419-amino-acid polypeptide reads, in one-letter code: Argininosuccinate synthase (419 aa).

9–17 (AYSGGLDTS) serves as a coordination point for ATP. Y87 provides a ligand contact to L-citrulline. G117 is a binding site for ATP. Residues T119, N123, and D124 each coordinate L-aspartate. N123 is an L-citrulline binding site. Residues R127, S175, S184, E260, and Y272 each coordinate L-citrulline.

Belongs to the argininosuccinate synthase family. Type 1 subfamily. Homotetramer.

It is found in the cytoplasm. It carries out the reaction L-citrulline + L-aspartate + ATP = 2-(N(omega)-L-arginino)succinate + AMP + diphosphate + H(+). The protein operates within amino-acid biosynthesis; L-arginine biosynthesis; L-arginine from L-ornithine and carbamoyl phosphate: step 2/3. This Brevibacillus brevis (strain 47 / JCM 6285 / NBRC 100599) protein is Argininosuccinate synthase.